The sequence spans 674 residues: Methionine--tRNA ligase (674 aa).

The short motif at 11 to 21 (PYANGDLHLGH) is the 'HIGH' region element. Residues C142, C145, C155, and C158 each contribute to the Zn(2+) site. A 'KMSKS' region motif is present at residues 330–334 (KMSKS). K333 contacts ATP. Residues 574–674 (DFMKVDLRIA…EGAQPGMRVK (101 aa)) form the tRNA-binding domain.

It belongs to the class-I aminoacyl-tRNA synthetase family. MetG type 1 subfamily. In terms of assembly, homodimer. Zn(2+) is required as a cofactor.

Its subcellular location is the cytoplasm. It carries out the reaction tRNA(Met) + L-methionine + ATP = L-methionyl-tRNA(Met) + AMP + diphosphate. Functionally, is required not only for elongation of protein synthesis but also for the initiation of all mRNA translation through initiator tRNA(fMet) aminoacylation. This Francisella tularensis subsp. holarctica (strain OSU18) protein is Methionine--tRNA ligase.